Reading from the N-terminus, the 870-residue chain is MSRFFRGDSSSESSSDEEEDLYSDDEEVQEQPEEESEEDDSEEDDDDDDSDSSSDDGVGKKTGANAFLKDDSDSDSESSGDEGVKVVKSAKNKRFEELEATAKAIENGEKINDWGSISAEFDKLNRQVAKLLQSGTTPKVYIKALAELEDFMNETLAKQKVTPKKMNATNSRGLNAVKQKLKKTSKEHQKDIDSFRADKDAYMESEDEEVVAPKPKKAKSSAAAQNLVIDGDDDEGWGTVGKGGRTLQFTPESILKHLRTILESRGKKNTDRNEQIKIMEKLYEVAATPYQRIRVLLTLISTRFDMTTGTQTFMSQEQWKAAEKEFATLLSVVETNREFVVVETAEPWEDDEKLPTVADGEKFKIPGSIVSFVERLDDELTRSLQHIDPHTAEYIERLSDESDLYNNIVRTMLYQEEISKDESLTEPQRSLNRVVMRRLEHVYFKPSAVIKILDENCWKAIPAELDSTITPRGSVQDAKTLVNILCNYLYINTEGEGLTKARAMLCQIYFEALHDNYYKARDMMLMSHLQETINSFDVHSQILFNRTLVQVGLCAFRAGLVYEAQTTLQEICGSGRQKELLAQGVMIQRYNQVTPDQERLEKQRQLPFHMHINLELLECVYLTCSMLLEIPLFAQTGSSPDIKKRIISKTYRRMLEYHERQIFTGPPENTRDHVMQASKALAQGEWKKATDYIHSIKIWELMSKPEEIKAMLSAQIQEEGLRTYLFTYAPYYDTLSVNRLSSMFELPDRKVAAIVSKMISHEELAAALDQVNSSIIFRKGVELSRLQSLALSLSDKASGLIESNERTLETRTQGTANAFERQGGRGGRGGNRGGRGGNRGGRGGISNAPRQAGGTQFTGGALGAAVGSRA.

A disordered region spans residues 1–92 (MSRFFRGDSS…GVKVVKSAKN (92 aa)). Over residues 14–54 (SSDEEEDLYSDDEEVQEQPEEESEEDDSEEDDDDDDSDSSS) the composition is skewed to acidic residues. In terms of domain architecture, PCI spans 608-782 (FHMHINLELL…SSIIFRKGVE (175 aa)). Residues 807 to 870 (TLETRTQGTA…ALGAAVGSRA (64 aa)) are disordered. Gly residues predominate over residues 824–844 (GRGGRGGNRGGRGGNRGGRGG).

The protein belongs to the eIF-3 subunit C family. As to quaternary structure, component of the eukaryotic translation initiation factor 3 (eIF-3) complex.

Its subcellular location is the cytoplasm. Component of the eukaryotic translation initiation factor 3 (eIF-3) complex, which is involved in protein synthesis of a specialized repertoire of mRNAs and, together with other initiation factors, stimulates binding of mRNA and methionyl-tRNAi to the 40S ribosome. The eIF-3 complex specifically targets and initiates translation of a subset of mRNAs involved in cell proliferation. The chain is Eukaryotic translation initiation factor 3 subunit C (nip1) from Sclerotinia sclerotiorum (strain ATCC 18683 / 1980 / Ss-1) (White mold).